We begin with the raw amino-acid sequence, 20 residues long: Protein YfiS (20 aa).

This is Protein YfiS from Escherichia coli (strain K12).